We begin with the raw amino-acid sequence, 247 residues long: MGICLICEQGADNSALSQLAERWGLVHDENAIMALVLTPQHLELRKRDEPKLGGIYVDFVSGTMAHRRRFGGGRGEAVAKAIGIKKDYLPTIVDATAGLGRDAFVLASLGCHVRMLERHPVVAALLDDGLQRGYQDEEIGGWLQQRMTLLHASSITALADITPQPDVVYLDPMYPHKQKSALVKKEMRVFQSLVGADEDADSLLSPARVLAKRRVVVKRPDYAEPLAGVAASAAITTKNHRFDIYPC.

Residues 101–102 (RD), 117–118 (ER), 153–154 (SS), and aspartate 171 each bind S-adenosyl-L-methionine.

The protein belongs to the methyltransferase superfamily. RsmJ family.

It is found in the cytoplasm. The catalysed reaction is guanosine(1516) in 16S rRNA + S-adenosyl-L-methionine = N(2)-methylguanosine(1516) in 16S rRNA + S-adenosyl-L-homocysteine + H(+). Its function is as follows. Specifically methylates the guanosine in position 1516 of 16S rRNA. This Photorhabdus laumondii subsp. laumondii (strain DSM 15139 / CIP 105565 / TT01) (Photorhabdus luminescens subsp. laumondii) protein is Ribosomal RNA small subunit methyltransferase J.